Consider the following 226-residue polypeptide: Ribosomal RNA large subunit methyltransferase E (226 aa).

Residues G82, W84, D100, D116, and D140 each coordinate S-adenosyl-L-methionine. The active-site Proton acceptor is the K180.

Belongs to the class I-like SAM-binding methyltransferase superfamily. RNA methyltransferase RlmE family.

It localises to the cytoplasm. The catalysed reaction is uridine(2552) in 23S rRNA + S-adenosyl-L-methionine = 2'-O-methyluridine(2552) in 23S rRNA + S-adenosyl-L-homocysteine + H(+). Functionally, specifically methylates the uridine in position 2552 of 23S rRNA at the 2'-O position of the ribose in the fully assembled 50S ribosomal subunit. In Caulobacter sp. (strain K31), this protein is Ribosomal RNA large subunit methyltransferase E.